A 141-amino-acid chain; its full sequence is MPPKFKRHLNDDDVTGSVKSERRNLLEDDSDEEEDFFLRGPSGPRFGPRNDKIKHVQNQVDEVIDVMQENITKVIERGERLDELQDKSESLSDNATAFSNRSKQLRRQMWWRGCKIKAIMALAAAILLLMIIILIVVKFRT.

Residues 1 to 51 form a disordered region; that stretch reads MPPKFKRHLNDDDVTGSVKSERRNLLEDDSDEEEDFFLRGPSGPRFGPRND. The Cytoplasmic segment spans residues 1 to 118; it reads MPPKFKRHLN…MWWRGCKIKA (118 aa). S17 and S30 each carry phosphoserine. The 61-residue stretch at 52–112 folds into the v-SNARE coiled-coil homology domain; the sequence is KIKHVQNQVD…KQLRRQMWWR (61 aa). The chain crosses the membrane as a helical; Anchor for type IV membrane protein span at residues 119 to 139; it reads IMALAAAILLLMIIILIVVKF. The Vesicular portion of the chain corresponds to 140–141; the sequence is RT.

The protein belongs to the synaptobrevin family. Identified in a complex containing STX6, STX12, VAMP4 and VTI1A. Interacts with BAIAP3; this interaction is increased in the presence of calcium. (Microbial infection) Targeted and hydrolyzed by C.botulinum neurotoxin type X (BoNT/X) which hydrolyzes the 87-Arg-|-Ser-88 bond and probably inhibits neurotransmitter release. It remains unknown whether BoNT/X is ever produced, or what organisms it targets.

It is found in the golgi apparatus. The protein localises to the trans-Golgi network membrane. In terms of biological role, involved in the pathway that functions to remove an inhibitor (probably synaptotagmin-4) of calcium-triggered exocytosis during the maturation of secretory granules. May be a marker for this sorting pathway that is critical for remodeling the secretory response of granule. This chain is Vesicle-associated membrane protein 4 (Vamp4), found in Mus musculus (Mouse).